Consider the following 179-residue polypeptide: Large ribosomal subunit protein uL5 (179 aa).

This sequence belongs to the universal ribosomal protein uL5 family. In terms of assembly, part of the 50S ribosomal subunit; part of the 5S rRNA/L5/L18/L25 subcomplex. Contacts the 5S rRNA and the P site tRNA. Forms a bridge to the 30S subunit in the 70S ribosome.

Functionally, this is one of the proteins that bind and probably mediate the attachment of the 5S RNA into the large ribosomal subunit, where it forms part of the central protuberance. In the 70S ribosome it contacts protein S13 of the 30S subunit (bridge B1b), connecting the 2 subunits; this bridge is implicated in subunit movement. Contacts the P site tRNA; the 5S rRNA and some of its associated proteins might help stabilize positioning of ribosome-bound tRNAs. The chain is Large ribosomal subunit protein uL5 from Pseudoalteromonas translucida (strain TAC 125).